The sequence spans 346 residues: Very-long-chain 3-oxoacyl-CoA reductase (346 aa).

The helical transmembrane segment at 26–46 (SAYFLLAAGSLFVASRALTFV) threads the bilayer. Residues Val-71, Asp-126, Asp-134, Asn-153, Tyr-220, Lys-224, Ile-253, and Ser-255 each coordinate NADP(+). The active-site Proton donor is Tyr-220. Catalysis depends on Lys-224, which acts as the Lowers pKa of active site Tyr.

This sequence belongs to the short-chain dehydrogenases/reductases (SDR) family.

It localises to the endoplasmic reticulum membrane. It carries out the reaction a very-long-chain (3R)-3-hydroxyacyl-CoA + NADP(+) = a very-long-chain 3-oxoacyl-CoA + NADPH + H(+). It functions in the pathway lipid metabolism; fatty acid biosynthesis. In terms of biological role, component of the microsomal membrane bound fatty acid elongation system, which produces the 26-carbon very long-chain fatty acids (VLCFA) from palmitate. Catalyzes the reduction of the 3-ketoacyl-CoA intermediate that is formed in each cycle of fatty acid elongation. VLCFAs serve as precursors for ceramide and sphingolipids. In Aspergillus oryzae (strain ATCC 42149 / RIB 40) (Yellow koji mold), this protein is Very-long-chain 3-oxoacyl-CoA reductase.